We begin with the raw amino-acid sequence, 679 residues long: Sodium-dependent phosphate transporter 1 (679 aa).

6 consecutive transmembrane segments (helical) span residues 21–41 (YLWM…SVGA), 62–82 (ACIL…AKVS), 100–120 (GLLM…QLVA), 158–178 (IVMS…ILFF), 203–223 (ACTV…LLGF), and 230–250 (GTIL…WFFV). A phosphoserine mark is found at Ser-265 and Ser-269. The tract at residues 268–288 (ESPLMEKKNSLKEDHEETKLS) is disordered. Positions 271–286 (LMEKKNSLKEDHEETK) are enriched in basic and acidic residues. 4 consecutive transmembrane segments (helical) span residues 511–531 (VSLL…FAHG), 558–578 (VATP…GLWV), 600–620 (FSIE…GLPI), and 650–670 (IFMA…AIMA). Residues 550–558 (DTGDVSSKV) form an a region.

It belongs to the inorganic phosphate transporter (PiT) (TC 2.A.20) family.

Its subcellular location is the cell membrane. The enzyme catalyses 2 Na(+)(out) + phosphate(out) = 2 Na(+)(in) + phosphate(in). In terms of biological role, sodium-phosphate symporter which preferentially transports the monovalent form of phosphate with a stoichiometry of two sodium ions per phosphate ion. May play a role in extracellular matrix and cartilage calcification as well as in vascular calcification. Essential for cell proliferation but this function is independent of its phosphate transporter activity. In Pongo abelii (Sumatran orangutan), this protein is Sodium-dependent phosphate transporter 1 (SLC20A1).